Reading from the N-terminus, the 497-residue chain is Angiopoietin-1 (497 aa).

An N-terminal signal peptide occupies residues 1 to 19 (MTVFLSFAFLAAILTHIGC). Residues N92, N122, N154, N243, and N294 are each glycosylated (N-linked (GlcNAc...) asparagine). A coiled-coil region spans residues 158-256 (RLEIQLLENS…LQKQQLELMD (99 aa)). In terms of domain architecture, Fibrinogen C-terminal spans 276–496 (KEEEKPFRDC…STTMMIRPLD (221 aa)). Intrachain disulfides connect C285/C314 and C438/C451.

As to quaternary structure, homooligomer. Interacts with TEK/TIE2. Interacts with SVEP1/polydom. Interacts with THBD; this interaction significantly inhibits the generation of activated PC and TAFIa/CPB2 by the thrombin/thrombomodulin complex.

It is found in the secreted. Binds and activates TIE2 receptor by inducing its tyrosine phosphorylation. Implicated in endothelial developmental processes later and distinct from that of VEGF. Appears to play a crucial role in mediating reciprocal interactions between the endothelium and surrounding matrix and mesenchyme. Mediates blood vessel maturation/stability. It may play an important role in the heart early development. This chain is Angiopoietin-1 (ANGPT1), found in Canis lupus familiaris (Dog).